The chain runs to 344 residues: L-threonine 3-dehydrogenase (344 aa).

A Zn(2+)-binding site is contributed by cysteine 42. Active-site charge relay system residues include threonine 44 and histidine 47. The Zn(2+) site is built by histidine 67, glutamate 68, cysteine 97, cysteine 100, cysteine 103, and cysteine 111. NAD(+)-binding positions include isoleucine 179, aspartate 199, arginine 204, 266–268 (LGI), and 290–291 (IY).

This sequence belongs to the zinc-containing alcohol dehydrogenase family. In terms of assembly, homotetramer. Zn(2+) serves as cofactor.

The protein resides in the cytoplasm. It carries out the reaction L-threonine + NAD(+) = (2S)-2-amino-3-oxobutanoate + NADH + H(+). The protein operates within amino-acid degradation; L-threonine degradation via oxydo-reductase pathway; glycine from L-threonine: step 1/2. Catalyzes the NAD(+)-dependent oxidation of L-threonine to 2-amino-3-ketobutyrate. The sequence is that of L-threonine 3-dehydrogenase from Mesorhizobium japonicum (strain LMG 29417 / CECT 9101 / MAFF 303099) (Mesorhizobium loti (strain MAFF 303099)).